The primary structure comprises 181 residues: Ribosome-recycling factor (181 aa).

The interval 131-154 (RRDAMDSVKKEKEMPEDDVRKAEN) is disordered.

Belongs to the RRF family.

It localises to the cytoplasm. In terms of biological role, responsible for the release of ribosomes from messenger RNA at the termination of protein biosynthesis. May increase the efficiency of translation by recycling ribosomes from one round of translation to another. The polypeptide is Ribosome-recycling factor (Leuconostoc citreum (strain KM20)).